A 128-amino-acid polypeptide reads, in one-letter code: Aspartate 1-decarboxylase (128 aa).

The active-site Schiff-base intermediate with substrate; via pyruvic acid is the serine 25. Residue serine 25 is modified to Pyruvic acid (Ser). Threonine 57 provides a ligand contact to substrate. Tyrosine 58 acts as the Proton donor in catalysis. Residue 73 to 75 coordinates substrate; the sequence is GSA.

Belongs to the PanD family. In terms of assembly, heterooctamer of four alpha and four beta subunits. Requires pyruvate as cofactor. Post-translationally, is synthesized initially as an inactive proenzyme, which is activated by self-cleavage at a specific serine bond to produce a beta-subunit with a hydroxyl group at its C-terminus and an alpha-subunit with a pyruvoyl group at its N-terminus.

The protein localises to the cytoplasm. The enzyme catalyses L-aspartate + H(+) = beta-alanine + CO2. Its pathway is cofactor biosynthesis; (R)-pantothenate biosynthesis; beta-alanine from L-aspartate: step 1/1. Catalyzes the pyruvoyl-dependent decarboxylation of aspartate to produce beta-alanine. The sequence is that of Aspartate 1-decarboxylase from Burkholderia pseudomallei (strain 668).